Consider the following 314-residue polypeptide: Acetaldehyde dehydrogenase 4 (314 aa).

Residue 15 to 18 (SGNI) coordinates NAD(+). Catalysis depends on Cys133, which acts as the Acyl-thioester intermediate. NAD(+)-binding positions include 164–172 (SAGPGTRAN) and Asn292.

This sequence belongs to the acetaldehyde dehydrogenase family.

It catalyses the reaction acetaldehyde + NAD(+) + CoA = acetyl-CoA + NADH + H(+). The sequence is that of Acetaldehyde dehydrogenase 4 from Burkholderia lata (strain ATCC 17760 / DSM 23089 / LMG 22485 / NCIMB 9086 / R18194 / 383).